Reading from the N-terminus, the 196-residue chain is UPF0134 protein MPN_501 (196 aa).

The protein belongs to the UPF0134 family.

This Mycoplasma pneumoniae (strain ATCC 29342 / M129 / Subtype 1) (Mycoplasmoides pneumoniae) protein is UPF0134 protein MPN_501.